The following is a 296-amino-acid chain: Pantothenate synthetase (296 aa).

Residue 31–38 (MGYLHEGH) participates in ATP binding. His38 functions as the Proton donor in the catalytic mechanism. Residue Gln62 participates in (R)-pantoate binding. Gln62 lines the beta-alanine pocket. 148-151 (GEKD) is an ATP binding site. A (R)-pantoate-binding site is contributed by Gln154. ATP-binding positions include Val177 and 185–188 (LSSR).

Belongs to the pantothenate synthetase family. As to quaternary structure, homodimer.

The protein resides in the cytoplasm. It carries out the reaction (R)-pantoate + beta-alanine + ATP = (R)-pantothenate + AMP + diphosphate + H(+). It participates in cofactor biosynthesis; (R)-pantothenate biosynthesis; (R)-pantothenate from (R)-pantoate and beta-alanine: step 1/1. Catalyzes the condensation of pantoate with beta-alanine in an ATP-dependent reaction via a pantoyl-adenylate intermediate. This chain is Pantothenate synthetase, found in Deinococcus geothermalis (strain DSM 11300 / CIP 105573 / AG-3a).